The chain runs to 264 residues: uncharacterized protein (264 aa).

The tract at residues 1–20 is disordered; that stretch reads MENIEKKCQPETINEDNNDE.

It belongs to the mimivirus R73/L269/L862 family.

This is an uncharacterized protein from Acanthamoeba polyphaga mimivirus (APMV).